The sequence spans 472 residues: Interferon-induced protein with tetratricopeptide repeats 2 (472 aa).

Ser2 carries the N-acetylserine modification. TPR repeat units lie at residues Ala51 to Ala89, Glu90 to Ser135, Pro136 to Asn171, Pro172 to Asn208, Thr247 to Asn280, Ala281 to Arg335, Val336 to Thr366, Pro367 to Ser405, and Arg406 to Gln448. Residues Met446–Glu472 are disordered. Positions Leu462 to Glu472 are enriched in polar residues.

It belongs to the IFIT family. Domain-swapped homodimer. Component of an interferon-dependent multiprotein complex, at least composed of IFIT1, IFIT2 and IFIT3. Interacts with IFIT1 and IFIT3. Interacts with STING1/MITA and disrupts its interaction with MAVS or TBK1. Interacts with EIF3E and EIF3C.

It localises to the cytoplasm. The protein resides in the endoplasmic reticulum. IFN-induced antiviral protein which inhibits expression of viral messenger RNAs lacking 2'-O-methylation of the 5' cap. The ribose 2'-O-methylation would provide a molecular signature to distinguish between self and non-self mRNAs by the host during viral infection. Viruses evolved several ways to evade this restriction system such as encoding their own 2'-O-methylase for their mRNAs or by stealing host cap containing the 2'-O-methylation (cap snatching mechanism). Binds AU-rich viral RNAs, with or without 5' triphosphorylation, RNA-binding is required for antiviral activity. Can promote apoptosis. In Homo sapiens (Human), this protein is Interferon-induced protein with tetratricopeptide repeats 2 (IFIT2).